We begin with the raw amino-acid sequence, 306 residues long: MRKRARIIYNPTSGKELFKRMLPEVLVKMEKAGFETSAYATQKAGDATIESKRALQEDYEMLIVAGGDGTLNEVVNGIAEHPKRPKIGVIPMGTVNDFGRALHLPTDILKAVDVIIEGHSVKVDIGKMNSRYFINLAAGGRITEVSYETSSKLKTFVGPFAYYIKGMEMLPQMTNVDVRIEYDGQVFQGEILLFLLGLTNSMAGFEKLVPDARLDDGYFTLIIVQKANLAELGHIMTLASRGEHIKHPKVIYEKAKSVNISSFEQMPLNVDGEYGGQLPANFLNLKQHIEVYTPKDVKNTELIQQD.

The 132-residue stretch at 1–132 (MRKRARIIYN…VDIGKMNSRY (132 aa)) folds into the DAGKc domain. ATP is bound by residues 10–14 (NPTSG), Thr41, 67–73 (GDGTLNE), and Thr94. Residues Arg213, Asp216, and Tyr218 each coordinate Mg(2+). Glu273 functions as the Proton acceptor in the catalytic mechanism.

The protein belongs to the diacylglycerol/lipid kinase family. Homodimer. Mg(2+) is required as a cofactor.

The catalysed reaction is a 1,2-diacyl-sn-glycerol + ATP = a 1,2-diacyl-sn-glycero-3-phosphate + ADP + H(+). Catalyzes the phosphorylation of diacylglycerol (DAG) into phosphatidic acid. Is a key enzyme involved in the production of lipoteichoic acid by reintroducing DAG formed from the breakdown of membrane phospholipids into the phosphatidylglycerol biosynthetic pathway. The protein is Diacylglycerol kinase (dagK) of Staphylococcus carnosus (strain TM300).